A 207-amino-acid polypeptide reads, in one-letter code: MEGESTAVNITETPKERKGKAPLLAPPPASGGIKTIVQKAPKGGYKRGLAVFDVVLRIAGIAAALGAVIAMGSTDQTLPFFTQFFQFKAEFDDLPVFTFFVIANAITAAYLALSIPISIVCIIRPHLVGPRVLLTFLDTVMVGLTTAAAGGAASIVYLAHNGNSDANWPAICQQFNDFCQEVSGAVVASFITVVVLMFLIVLSAFSL.

Residues 1-12 show a composition bias toward polar residues; it reads MEGESTAVNITE. The segment at 1 to 24 is disordered; sequence MEGESTAVNITETPKERKGKAPLL. Over 1 to 48 the chain is Cytoplasmic; sequence MEGESTAVNITETPKERKGKAPLLAPPPASGGIKTIVQKAPKGGYKRG. The chain crosses the membrane as a helical span at residues 49–69; that stretch reads LAVFDVVLRIAGIAAALGAVI. Over 70 to 98 the chain is Extracellular; the sequence is AMGSTDQTLPFFTQFFQFKAEFDDLPVFT. A helical transmembrane segment spans residues 99-119; sequence FFVIANAITAAYLALSIPISI. Over 120–138 the chain is Cytoplasmic; it reads VCIIRPHLVGPRVLLTFLD. A helical membrane pass occupies residues 139–159; the sequence is TVMVGLTTAAAGGAASIVYLA. The Extracellular portion of the chain corresponds to 160-184; sequence HNGNSDANWPAICQQFNDFCQEVSG. The helical transmembrane segment at 185–205 threads the bilayer; that stretch reads AVVASFITVVVLMFLIVLSAF. The Cytoplasmic segment spans residues 206–207; that stretch reads SL.

The protein belongs to the Casparian strip membrane proteins (CASP) family. In terms of assembly, homodimer and heterodimers.

It localises to the cell membrane. Regulates membrane-cell wall junctions and localized cell wall deposition. Required for establishment of the Casparian strip membrane domain (CSD) and the subsequent formation of Casparian strips, a cell wall modification of the root endodermis that determines an apoplastic barrier between the intraorganismal apoplasm and the extraorganismal apoplasm and prevents lateral diffusion. This is Casparian strip membrane protein 1 from Taraxacum kok-saghyz (Russian dandelion).